The chain runs to 183 residues: uncharacterized protein (183 aa).

The Macro domain occupies 1 to 182; sequence MFRVVHGDIT…VALKVLERDE (182 aa).

This is an uncharacterized protein from Pyrococcus abyssi (strain GE5 / Orsay).